Reading from the N-terminus, the 220-residue chain is Putative cobalt transport protein CbiM (220 aa).

Transmembrane regions (helical) follow at residues 6–26 (GFLPGIWALVWFVVAIPVISY), 45–65 (IAVAAAFIFVLSALKIPSVTG), 74–94 (GIAVVLFGPAVTAFLSAIVLL), 107–127 (TLGANVVSMGVVGPVAGWVVF), 153–173 (LVTSIQLGVAFPSGPGVAGVV), and 188–208 (IPIGIVEGALAAGLIGYIAMS).

It belongs to the CbiM family. Forms an energy-coupling factor (ECF) transporter complex composed of an ATP-binding protein (A component, CbiO), a transmembrane protein (T component, CbiQ) and 2 possible substrate-capture proteins (S components, CbiM and CbiN) of unknown stoichimetry.

It is found in the cell membrane. Its pathway is cofactor biosynthesis; adenosylcobalamin biosynthesis. Part of the energy-coupling factor (ECF) transporter complex CbiMNOQ involved in cobalt import. This Halobacterium salinarum (strain ATCC 29341 / DSM 671 / R1) protein is Putative cobalt transport protein CbiM.